Consider the following 54-residue polypeptide: U-reduvitoxin-Pr1a (54 aa).

Residues 1–19 form the signal peptide; sequence MKLLGLLLLVFTFMALAFA. 3 cysteine pairs are disulfide-bonded: Cys24–Cys39, Cys31–Cys44, and Cys38–Cys51.

This sequence belongs to the venom Ptu1-like knottin family. In terms of tissue distribution, expressed by the venom gland (posterior main gland) (at protein level).

The protein localises to the secreted. Binds reversibly and blocks P/Q-type voltage-gated calcium channels (Cav). This is U-reduvitoxin-Pr1a from Platymeris rhadamanthus (Red spot assassin bug).